A 147-amino-acid chain; its full sequence is Ribonuclease 4 (147 aa).

Residues 1 to 28 (MALQRTHSLLLLLLLTLLGLGLVQPSYG) form the signal peptide. Gln29 bears the Pyrrolidone carboxylic acid mark. DUMP contacts are provided by Arg35, His40, Lys68, Asn71, and Thr72. His40 (proton acceptor) is an active-site residue. 4 disulfides stabilise this stretch: Cys53-Cys109, Cys67-Cys120, Cys85-Cys135, and Cys92-Cys99. Residue His144 is the Proton donor of the active site. Phe145 contacts dUMP.

It belongs to the pancreatic ribonuclease family.

The protein resides in the secreted. In terms of biological role, cleaves preferentially after uridine bases. Has antimicrobial activity against uropathogenic E.coli (UPEC). Probably contributes to urinary tract sterility. This chain is Ribonuclease 4 (RNASE4), found in Pan troglodytes (Chimpanzee).